Reading from the N-terminus, the 317-residue chain is Protein IMPACT-B (317 aa).

Residues 17-118 form the RWD domain; the sequence is EEIEALSSIY…EKIREFLTEK (102 aa). Residues 296 to 317 are disordered; that stretch reads DSTEETSKAGGKSKKPKSKKTK. Over residues 306-317 the composition is skewed to basic residues; sequence GKSKKPKSKKTK.

It belongs to the IMPACT family. As to quaternary structure, interacts with GCN1; prevents the interaction of GCN1 with EIF2AK4/GCN2 and inhibits EIF2AK4/GCN2 kinase activity. Interaction with RPL39; this interaction occurs in a GCN1-independent manner. Associates with ribosomes; this interaction occurs in a GCN1-independent manner. Associates with actin; this interaction occurs in a GCN1-independent manner.

The protein localises to the cytoplasm. Its function is as follows. Translational regulator that ensures constant high levels of translation upon a variety of stress conditions, such as amino acid starvation, UV-C irradiation, proteasome inhibitor treatment and glucose deprivation. Plays a role as a negative regulator of the EIF2AK4/GCN2 kinase activity; impairs GCN1-mediated EIF2AK4/GCN2 activation, and hence EIF2AK4/GCN2-mediated eIF-2-alpha phosphorylation and subsequent down-regulation of protein synthesis. Plays a role in differentiation of neuronal cells by stimulating neurite outgrowth. This is Protein IMPACT-B (impact-B) from Xenopus tropicalis (Western clawed frog).